A 288-amino-acid chain; its full sequence is 4-hydroxybenzoate octaprenyltransferase (288 aa).

The next 6 membrane-spanning stretches (helical) occupy residues 20–40 (IGTL…AGGL), 43–63 (LKVF…GCII), 96–116 (LFVV…PLVV), 210–230 (QIIG…GMVA), 234–254 (AIYA…QKLI), and 262–282 (CFTA…ALML).

Belongs to the UbiA prenyltransferase family. It depends on Mg(2+) as a cofactor.

The protein localises to the cell inner membrane. The catalysed reaction is all-trans-octaprenyl diphosphate + 4-hydroxybenzoate = 4-hydroxy-3-(all-trans-octaprenyl)benzoate + diphosphate. It functions in the pathway cofactor biosynthesis; ubiquinone biosynthesis. Its function is as follows. Catalyzes the prenylation of para-hydroxybenzoate (PHB) with an all-trans polyprenyl group. Mediates the second step in the final reaction sequence of ubiquinone-8 (UQ-8) biosynthesis, which is the condensation of the polyisoprenoid side chain with PHB, generating the first membrane-bound Q intermediate 3-octaprenyl-4-hydroxybenzoate. The sequence is that of 4-hydroxybenzoate octaprenyltransferase from Shewanella pealeana (strain ATCC 700345 / ANG-SQ1).